Reading from the N-terminus, the 463-residue chain is Nicotinate phosphoribosyltransferase pncB2 (463 aa).

His-202 carries the post-translational modification Phosphohistidine.

The protein belongs to the NAPRTase family. Post-translationally, transiently phosphorylated on a His residue during the reaction cycle. Phosphorylation strongly increases the affinity for substrates and increases the rate of nicotinate D-ribonucleotide production. Dephosphorylation regenerates the low-affinity form of the enzyme, leading to product release.

The catalysed reaction is nicotinate + 5-phospho-alpha-D-ribose 1-diphosphate + ATP + H2O = nicotinate beta-D-ribonucleotide + ADP + phosphate + diphosphate. Its pathway is cofactor biosynthesis; NAD(+) biosynthesis; nicotinate D-ribonucleotide from nicotinate: step 1/1. In terms of biological role, involved in the Preiss-Handler pathway, which is a recycling route that permits the salvage of free nicotinamide (NM) and nicotinic acid (Na) involved in the NAD biosynthesis. Catalyzes the synthesis of beta-nicotinate D-ribonucleotide from nicotinate and 5-phospho-D-ribose 1-phosphate at the expense of ATP. It is not able to use nicotinamide. PncB2 appears to be responsible for the increased salvage synthesis of NAD during infection of host tissues. The protein is Nicotinate phosphoribosyltransferase pncB2 (pncB2) of Mycobacterium tuberculosis (strain CDC 1551 / Oshkosh).